Consider the following 1961-residue polypeptide: Myosin-9 (1961 aa).

At Ala2 the chain carries N-acetylalanine. The segment at Ala2–Leu838 is mediates interaction with LIMCH1. The residue at position 8 (Lys8) is an N6-acetyllysine. Tyr11 is subject to Phosphotyrosine. The 51-residue stretch at Gly27 to Pro77 folds into the Myosin N-terminal SH3-like domain. Residues Ser81 to Asp776 form the Myosin motor domain. Lys102 carries the post-translational modification N6-acetyllysine. Gly174–Thr181 is an ATP binding site. N6-acetyllysine is present on residues Lys299, Lys435, and Lys613. A Phosphoserine modification is found at Ser628. Residues Leu654–His676 are actin-binding. The residue at position 754 (Tyr754) is a Phosphotyrosine. Residues Ile779–Ala808 form the IQ domain. Residues Ile841–Met1927 are a coiled coil. Lys850 bears the N6-succinyllysine mark. N6-acetyllysine occurs at positions 860, 975, and 1024. The segment covering Arg1035–Gly1055 has biased composition (basic and acidic residues). A disordered region spans residues Arg1035–Ser1057. Ser1114 is subject to Phosphoserine. An N6-acetyllysine mark is found at Lys1234 and Lys1249. A disordered region spans residues Leu1331–Lys1353. Residues Lys1332–Gln1344 show a composition bias toward basic and acidic residues. N6-acetyllysine is present on residues Lys1358, Lys1393, Lys1405, Lys1411, Lys1460, and Lys1639. An N6-succinyllysine modification is found at Lys1670. A Phosphoserine modification is found at Ser1715. 3 positions are modified to N6-acetyllysine: Lys1794, Lys1803, and Lys1846. The disordered stretch occupies residues Arg1878–Ala1910. Arg1924 is subject to Omega-N-methylarginine. Residues Lys1938 to Glu1961 form a disordered region. Ser1944 is modified (phosphoserine). A compositionally biased stretch (basic and acidic residues) spans Asp1949–Glu1961.

Belongs to the TRAFAC class myosin-kinesin ATPase superfamily. Myosin family. As to quaternary structure, myosin is a hexameric protein that consists of 2 heavy chain subunits (MHC), 2 alkali light chain subunits (MLC) and 2 regulatory light chain subunits (MLC-2). Interacts with RASIP1. Interacts with DDR1. Interacts with PDLIM2. Interacts with SVIL. Interacts with HTRA3. Interacts with Myo7a. Interacts with CFAP95. Interacts with LIMCH1; independently of the integration of MYH9 into the myosin complex. Interacts with RAB3A. Interacts with ZBED4. Interacts with S100A4; this interaction increases cell motility. In terms of processing, ISGylated. Ubiquitination.

The protein localises to the cytoplasm. Its subcellular location is the cytoskeleton. The protein resides in the cell cortex. It localises to the cytoplasmic vesicle. It is found in the secretory vesicle. The protein localises to the cortical granule. Cellular myosin that appears to play a role in cytokinesis, cell shape, and specialized functions such as secretion and capping. Required for cortical actin clearance prior to oocyte exocytosis. Promotes cell motility in conjunction with S100A4. During cell spreading, plays an important role in cytoskeleton reorganization, focal contact formation (in the margins but not the central part of spreading cells), and lamellipodial retraction; this function is mechanically antagonized by MYH10. The sequence is that of Myosin-9 (Myh9) from Rattus norvegicus (Rat).